Reading from the N-terminus, the 104-residue chain is Flagellar hook-basal body complex protein FliE (104 aa).

This sequence belongs to the FliE family.

Its subcellular location is the bacterial flagellum basal body. In Salmonella typhi, this protein is Flagellar hook-basal body complex protein FliE.